Consider the following 147-residue polypeptide: Holdfast attachment protein A (147 aa).

In terms of biological role, involved in attachment of the holdfast to the cell. The holdfast is a structure that allows the bacteria to firmly adheres to surfaces. The sequence is that of Holdfast attachment protein A (hfaA) from Caulobacter vibrioides (strain ATCC 19089 / CIP 103742 / CB 15) (Caulobacter crescentus).